A 583-amino-acid polypeptide reads, in one-letter code: Aspartate--tRNA(Asp/Asn) ligase (583 aa).

E173 serves as a coordination point for L-aspartate. The segment at 197–200 (QMFK) is aspartate. R219 is an L-aspartate binding site. ATP contacts are provided by residues 219 to 221 (RDE) and Q228. Residue H447 coordinates L-aspartate. Residue E481 participates in ATP binding. R488 contacts L-aspartate. 533-536 (GLDR) serves as a coordination point for ATP.

The protein belongs to the class-II aminoacyl-tRNA synthetase family. Type 1 subfamily. As to quaternary structure, homodimer.

Its subcellular location is the cytoplasm. It carries out the reaction tRNA(Asx) + L-aspartate + ATP = L-aspartyl-tRNA(Asx) + AMP + diphosphate. Its function is as follows. Aspartyl-tRNA synthetase with relaxed tRNA specificity since it is able to aspartylate not only its cognate tRNA(Asp) but also tRNA(Asn). Reaction proceeds in two steps: L-aspartate is first activated by ATP to form Asp-AMP and then transferred to the acceptor end of tRNA(Asp/Asn). The protein is Aspartate--tRNA(Asp/Asn) ligase of Elusimicrobium minutum (strain Pei191).